We begin with the raw amino-acid sequence, 199 residues long: Imidazole glycerol phosphate synthase subunit HisH (199 aa).

The 198-residue stretch at 2–199 folds into the Glutamine amidotransferase type-1 domain; sequence RAVIIDYGVG…LTNVYRWLRK (198 aa). The active-site Nucleophile is the Cys-76. Residues His-178 and Glu-180 contribute to the active site.

As to quaternary structure, heterodimer of HisH and HisF.

Its subcellular location is the cytoplasm. It catalyses the reaction 5-[(5-phospho-1-deoxy-D-ribulos-1-ylimino)methylamino]-1-(5-phospho-beta-D-ribosyl)imidazole-4-carboxamide + L-glutamine = D-erythro-1-(imidazol-4-yl)glycerol 3-phosphate + 5-amino-1-(5-phospho-beta-D-ribosyl)imidazole-4-carboxamide + L-glutamate + H(+). The enzyme catalyses L-glutamine + H2O = L-glutamate + NH4(+). It functions in the pathway amino-acid biosynthesis; L-histidine biosynthesis; L-histidine from 5-phospho-alpha-D-ribose 1-diphosphate: step 5/9. Functionally, IGPS catalyzes the conversion of PRFAR and glutamine to IGP, AICAR and glutamate. The HisH subunit catalyzes the hydrolysis of glutamine to glutamate and ammonia as part of the synthesis of IGP and AICAR. The resulting ammonia molecule is channeled to the active site of HisF. This Sulfolobus acidocaldarius (strain ATCC 33909 / DSM 639 / JCM 8929 / NBRC 15157 / NCIMB 11770) protein is Imidazole glycerol phosphate synthase subunit HisH.